A 120-amino-acid chain; its full sequence is uncharacterized protein (120 aa).

This is an uncharacterized protein from Enterobacteria phage T4 (Bacteriophage T4).